The following is a 512-amino-acid chain: 2-isopropylmalate synthase (512 aa).

Positions 4 to 266 constitute a Pyruvate carboxyltransferase domain; that stretch reads IQFFDTTLRD…ETNIVLNQFK (263 aa). Positions 13, 201, 203, and 237 each coordinate Mn(2+). Residues 390–512 form a regulatory domain region; the sequence is ELKHLQVQYV…SKQADFEEVK (123 aa).

This sequence belongs to the alpha-IPM synthase/homocitrate synthase family. LeuA type 1 subfamily. Homodimer. Mn(2+) serves as cofactor.

Its subcellular location is the cytoplasm. The catalysed reaction is 3-methyl-2-oxobutanoate + acetyl-CoA + H2O = (2S)-2-isopropylmalate + CoA + H(+). Its pathway is amino-acid biosynthesis; L-leucine biosynthesis; L-leucine from 3-methyl-2-oxobutanoate: step 1/4. Its function is as follows. Catalyzes the condensation of the acetyl group of acetyl-CoA with 3-methyl-2-oxobutanoate (2-ketoisovalerate) to form 3-carboxy-3-hydroxy-4-methylpentanoate (2-isopropylmalate). This Listeria monocytogenes serotype 4a (strain HCC23) protein is 2-isopropylmalate synthase.